The following is a 555-amino-acid chain: Alpha-1,2-mannosyltransferase ALG9 (555 aa).

Topologically, residues 1 to 7 (MNCKAVT) are cytoplasmic. A helical membrane pass occupies residues 8–28 (ISLLLLLFLTRVYIQPTFSLI). Topologically, residues 29–62 (SDCDETFNYWEPLNLLVRGFGKQTWEYSPEYSIR) are lumenal. A helical membrane pass occupies residues 63 to 83 (SWAFLLPFYCILYPVNKFTDL). Topologically, residues 84–86 (ESH) are cytoplasmic. A helical membrane pass occupies residues 87–107 (WNFFITRACLGFFSFIMEFKL). At 108–113 (HREIAG) the chain is on the lumenal side. The chain crosses the membrane as a helical span at residues 114–134 (SLALQIANIWIIFQLFNPGWF). The Cytoplasmic segment spans residues 135 to 176 (HASVELLPSAVAMLLYVGATRHSLRYLSTGSTSNFTKSLAYN). Residues 177–197 (FLASILGWPFVLILSLPLCLH) traverse the membrane as a helical segment. At 198–213 (YLFNHRIISTIRTAFD) the chain is on the lumenal side. A helical membrane pass occupies residues 214–234 (CCLIFSLTAFAVIVTDSIFYG). Topologically, residues 235–268 (KLAPVSWNILFYNVINASEESGPNIFGVEPWYYY) are cytoplasmic. A helical membrane pass occupies residues 269-289 (PLNLLLNFPLPVLVLAILGIF). Over 290–316 (HLRLWPLWASLFTWIAVFTQQPHKEER) the chain is Lumenal. Residues 317–337 (FLYPIYGLITLSASIAFYKVL) form a helical membrane-spanning segment. Over 338-349 (NLFNRKPILKKG) the chain is Cytoplasmic. A helical membrane pass occupies residues 350–370 (IKLSVLLIVAGQAMSRIVALV). Residues 371–555 (NNYTAPIAVY…LFEKPTETTN (185 aa)) are Lumenal-facing.

Belongs to the glycosyltransferase 22 family.

Its subcellular location is the endoplasmic reticulum membrane. The enzyme catalyses an alpha-D-Man-(1-&gt;2)-alpha-D-Man-(1-&gt;2)-alpha-D-Man-(1-&gt;3)-[alpha-D-Man-(1-&gt;3)-alpha-D-Man-(1-&gt;6)]-beta-D-Man-(1-&gt;4)-beta-D-GlcNAc-(1-&gt;4)-alpha-D-GlcNAc-diphospho-di-trans,poly-cis-dolichol + a di-trans,poly-cis-dolichyl beta-D-mannosyl phosphate = an alpha-D-Man-(1-&gt;2)-alpha-D-Man-(1-&gt;2)-alpha-D-Man-(1-&gt;3)-[alpha-D-Man-(1-&gt;2)-alpha-D-Man-(1-&gt;3)-alpha-D-Man-(1-&gt;6)]-beta-D-Man-(1-&gt;4)-beta-D-GlcNAc-(1-&gt;4)-alpha-D-GlcNAc-diphospho-di-trans,poly-cis-dolichol + a di-trans,poly-cis-dolichyl phosphate + H(+). The catalysed reaction is an alpha-D-Man-(1-&gt;2)-alpha-D-Man-(1-&gt;2)-alpha-D-Man-(1-&gt;3)-[alpha-D-Man-(1-&gt;2)-alpha-D-Man-(1-&gt;3)-[alpha-D-Man-(1-&gt;6)]-alpha-D-Man-(1-&gt;6)]-beta-D-Man-(1-&gt;4)-beta-D-GlcNAc-(1-&gt;4)-alpha-D-GlcNAc-diphospho-di-trans,poly-cis-dolichol + a di-trans,poly-cis-dolichyl beta-D-mannosyl phosphate = an alpha-D-Man-(1-&gt;2)-alpha-D-Man-(1-&gt;2)-alpha-D-Man-(1-&gt;3)-[alpha-D-Man-(1-&gt;2)-alpha-D-Man-(1-&gt;3)-[alpha-D-Man-(1-&gt;2)-alpha-D-Man-(1-&gt;6)]-alpha-D-Man-(1-&gt;6)]-beta-D-Man-(1-&gt;4)-beta-D-GlcNAc-(1-&gt;4)-alpha-D-GlcNAc-diphospho-di-trans,poly-cis-dolichol + a di-trans,poly-cis-dolichyl phosphate + H(+). It functions in the pathway protein modification; protein glycosylation. Mannosyltransferase that operates in the biosynthetic pathway of dolichol-linked oligosaccharides, the glycan precursors employed in protein asparagine (N)-glycosylation. The assembly of dolichol-linked oligosaccharides begins on the cytosolic side of the endoplasmic reticulum membrane and finishes in its lumen. The sequential addition of sugars to dolichol pyrophosphate produces dolichol-linked oligosaccharides containing fourteen sugars, including two GlcNAcs, nine mannoses and three glucoses. Once assembled, the oligosaccharide is transferred from the lipid to nascent proteins by oligosaccharyltransferases. In the lumen of the endoplasmic reticulum, catalyzes the addition of the seventh and ninth alpha-1,2-linked mannose residues to Man(6)GlcNAc(2)-PP-dolichol and Man(8)GlcNAc(2)-PP-dolichol respectively. This Saccharomyces cerevisiae (strain ATCC 204508 / S288c) (Baker's yeast) protein is Alpha-1,2-mannosyltransferase ALG9 (ALG9).